The chain runs to 495 residues: Probable aspartic-type endopeptidase OPSB (495 aa).

The N-terminal stretch at 1–19 is a signal peptide; the sequence is MRGDSFIWSLATAIPLLST. The region spanning 73–408 is the Peptidase A1 domain; sequence YFCNLTLGTP…DLDNNEISIA (336 aa). Asn76 carries N-linked (GlcNAc...) asparagine glycosylation. The active site involves Asp91. Asn136 is a glycosylation site (N-linked (GlcNAc...) asparagine). Asp290 is an active-site residue. Asn413 carries N-linked (GlcNAc...) asparagine glycosylation. The tract at residues 447–470 is disordered; it reads ATGLPGVETGVPGSRPPSSKAAGQ. Ala467 carries the GPI-anchor amidated alanine lipid modification. The propeptide at 468–495 is removed in mature form; sequence AGQAKRPDFVLGVAAVGLAGAGMLFAAM.

The protein belongs to the peptidase A1 family.

Its subcellular location is the cell membrane. Probable GPI-anchored aspartic-type endopeptidase which contributes to virulence. The protein is Probable aspartic-type endopeptidase OPSB (OPSB) of Arthroderma benhamiae (strain ATCC MYA-4681 / CBS 112371) (Trichophyton mentagrophytes).